The following is a 306-amino-acid chain: Dihydroorotate dehydrogenase B (NAD(+)), catalytic subunit (306 aa).

Residues serine 22 and 46–47 (KT) contribute to the FMN site. Residues lysine 46, 70-74 (NSIGL), and asparagine 128 contribute to the substrate site. Asparagine 128 is a binding site for FMN. The Nucleophile role is filled by cysteine 131. Residue lysine 164 coordinates FMN. 191–192 (NT) lines the substrate pocket. Residues glycine 216, 242-243 (GG), and 264-265 (GS) each bind FMN.

Belongs to the dihydroorotate dehydrogenase family. Type 1 subfamily. Heterotetramer of 2 PyrK and 2 PyrD type B subunits. It depends on FMN as a cofactor.

Its subcellular location is the cytoplasm. It carries out the reaction (S)-dihydroorotate + NAD(+) = orotate + NADH + H(+). Its pathway is pyrimidine metabolism; UMP biosynthesis via de novo pathway; orotate from (S)-dihydroorotate (NAD(+) route): step 1/1. Catalyzes the conversion of dihydroorotate to orotate with NAD(+) as electron acceptor. This Endomicrobium trichonymphae protein is Dihydroorotate dehydrogenase B (NAD(+)), catalytic subunit (pyrD).